Reading from the N-terminus, the 259-residue chain is MNYTKVYNNLIKKGKLRKLDKSKLNFYTEKHHIIPSCIGGNDDSDNLVLLTAREHFIAHWLLAKIHYNSPGLIYAWWSFYNFGEDSLGRNLKLTSRGYQLVREKFSKIHSNTMKEMWKSNEYREKRSITLSLPEIRAKISESQLEAQNKPEVKEKISKGVKAAFKRPGVKEKHSAAVKKSLNNFEAKKKQSNSSKIRQRTGKHWQDYDLLYKLWIKLNRPKRGSFGTYISKLGYPKSNYHRLIVQFNEDYERSNNENCS.

To phage T4 mobB and mobC.

This is Probable mobile endonuclease D (mobD) from Enterobacteria phage T4 (Bacteriophage T4).